Consider the following 247-residue polypeptide: Carboxy-S-adenosyl-L-methionine synthase (247 aa).

Residues Y40, 65 to 67, 90 to 91, 122 to 123, N137, and R204 each bind S-adenosyl-L-methionine; these read GSS, DN, and DI.

It belongs to the class I-like SAM-binding methyltransferase superfamily. Cx-SAM synthase family. As to quaternary structure, homodimer.

It carries out the reaction prephenate + S-adenosyl-L-methionine = carboxy-S-adenosyl-L-methionine + 3-phenylpyruvate + H2O. Functionally, catalyzes the conversion of S-adenosyl-L-methionine (SAM) to carboxy-S-adenosyl-L-methionine (Cx-SAM). In Pseudomonas syringae pv. syringae (strain B728a), this protein is Carboxy-S-adenosyl-L-methionine synthase.